Consider the following 68-residue polypeptide: Protease A inhibitor 3 (68 aa).

M1 is modified (N-acetylmethionine). Positions 1–14 are enriched in polar residues; the sequence is MNTDQQKVSEIFQS. Disordered stretches follow at residues 1–21 and 33–68; these read MNTD…KLQG and MASQ…HKKE. The interval 1–32 is inhibitory domain; it reads MNTDQQKVSEIFQSSKEKLQGDAKVVSDAFKK. Residues 33–53 show a composition bias toward basic and acidic residues; it reads MASQDKDGKTTDADESEKHNY.

This sequence belongs to the protease inhibitor I34 family.

In terms of biological role, specific and potent inhibitor for yeast aspartic protease A (yscA). The proteinase acts as a folding template stabilizing the helical conformation in the inhibitor, which results in the potent and specific blockage of the proteolytic activity. This Saccharomyces cerevisiae (strain ATCC 204508 / S288c) (Baker's yeast) protein is Protease A inhibitor 3 (PAI3).